A 232-amino-acid chain; its full sequence is Small ribosomal subunit protein uS2 (232 aa).

Belongs to the universal ribosomal protein uS2 family.

This is Small ribosomal subunit protein uS2 from Alkaliphilus oremlandii (strain OhILAs) (Clostridium oremlandii (strain OhILAs)).